The following is a 65-amino-acid chain: Large ribosomal subunit protein bL35 (65 aa).

Residues 1-46 form a disordered region; sequence MPKIKTNRGAAKRFKPTGSGGFKRAQSHRRHILTKKSTKRKRHLRS. Residues 25 to 45 show a composition bias toward basic residues; it reads AQSHRRHILTKKSTKRKRHLR.

It belongs to the bacterial ribosomal protein bL35 family.

In Thioalkalivibrio sulfidiphilus (strain HL-EbGR7), this protein is Large ribosomal subunit protein bL35.